The primary structure comprises 710 residues: Subtilisin-like protease SBT4.8 (710 aa).

The N-terminal stretch at 1–23 is a signal peptide; that stretch reads MVKRASFCLLSCLIILFLSSVSA. The propeptide at 24–111 is activation peptide; that stretch reads IIYDPQDKQV…VFRSKNYKLQ (88 aa). Residues 33-110 form the Inhibitor I9 domain; sequence VYVVYMGSLP…SVFRSKNYKL (78 aa). The 445-residue stretch at 115 to 559 folds into the Peptidase S8 domain; the sequence is SWDFMGMKEG…AGHVDPIAAI (445 aa). The active-site Charge relay system is the Asp143. An N-linked (GlcNAc...) asparagine glycan is attached at Asn174. His198 functions as the Charge relay system in the catalytic mechanism. N-linked (GlcNAc...) asparagine glycans are attached at residues Asn221, Asn364, and Asn419. Positions 354 to 414 constitute a PA domain; the sequence is KYPLEYGDYL…VLSQDDFDSL (61 aa). Ser498 serves as the catalytic Charge relay system. N-linked (GlcNAc...) asparagine glycosylation is found at Asn535, Asn568, Asn580, Asn618, and Asn636.

It belongs to the peptidase S8 family. In terms of processing, the C-terminal propeptide is autocleaved.

It localises to the secreted. This chain is Subtilisin-like protease SBT4.8, found in Arabidopsis thaliana (Mouse-ear cress).